A 569-amino-acid chain; its full sequence is Proline--tRNA ligase (569 aa).

It belongs to the class-II aminoacyl-tRNA synthetase family. ProS type 1 subfamily. Homodimer.

Its subcellular location is the cytoplasm. It catalyses the reaction tRNA(Pro) + L-proline + ATP = L-prolyl-tRNA(Pro) + AMP + diphosphate. Its function is as follows. Catalyzes the attachment of proline to tRNA(Pro) in a two-step reaction: proline is first activated by ATP to form Pro-AMP and then transferred to the acceptor end of tRNA(Pro). As ProRS can inadvertently accommodate and process non-cognate amino acids such as alanine and cysteine, to avoid such errors it has two additional distinct editing activities against alanine. One activity is designated as 'pretransfer' editing and involves the tRNA(Pro)-independent hydrolysis of activated Ala-AMP. The other activity is designated 'posttransfer' editing and involves deacylation of mischarged Ala-tRNA(Pro). The misacylated Cys-tRNA(Pro) is not edited by ProRS. In Endomicrobium trichonymphae, this protein is Proline--tRNA ligase.